A 148-amino-acid chain; its full sequence is Large ribosomal subunit protein uL15 (148 aa).

The tract at residues 18–38 is disordered; the sequence is GYGRVGKHRKHPGGRGNAGGL.

The protein belongs to the universal ribosomal protein uL15 family.

The polypeptide is Large ribosomal subunit protein uL15 (rpl27a) (Dictyostelium discoideum (Social amoeba)).